A 434-amino-acid chain; its full sequence is Pre-B-cell leukemia transcription factor 3 (434 aa).

The disordered stretch occupies residues 20-41; it reads SVQGGMALPPPPHGHEGADGDG. Over residues 32–41 the composition is skewed to basic and acidic residues; that stretch reads HGHEGADGDG. The PBC domain occupies 41–234; the sequence is GRKQDIGDIL…VMILRSRFLD (194 aa). The PBC-A stretch occupies residues 48 to 127; sequence DILHQIMTIT…EGVSGPEKGG (80 aa). The segment at 130–234 is PBC-B; it reads AAAAAAAAAS…VMILRSRFLD (105 aa). Residues 235-297 constitute a DNA-binding region (homeobox; TALE-type); sequence ARRKRRNFSK…NKRIRYKKNI (63 aa). Over residues 326–341 the composition is skewed to low complexity; it reads NQTNSPTTPNSGSSGS. Disordered stretches follow at residues 326–349 and 403–434; these read NQTN…NSGD and LNAN…DTSN. Positions 403-422 are enriched in polar residues; it reads LNANGGWQDATTPSSVTSPT.

It belongs to the TALE/PBX homeobox family. As to quaternary structure, interacts with PBXIP1. Ubiquitously expressed.

Its subcellular location is the nucleus. Transcriptional activator that binds the sequence 5'-ATCAATCAA-3'. This is Pre-B-cell leukemia transcription factor 3 (PBX3) from Homo sapiens (Human).